Consider the following 534-residue polypeptide: Probable bifunctional tRNA threonylcarbamoyladenosine biosynthesis protein (534 aa).

The interval 1–324 is kae1; that stretch reads MICLGIEGTA…YRTDQVEVTW (324 aa). Residues His108, His112, and Tyr129 each contribute to the Fe cation site. Residues 129 to 133, Asp161, Gly174, Glu178, and Asn258 each bind L-threonylcarbamoyladenylate; that span reads YTSGG. Residue Asp286 participates in Fe cation binding. One can recognise a Protein kinase domain in the interval 335–534; that stretch reads LPDNIKEKGA…DEIEKRGRYL (200 aa). Residues 340 to 348 and Lys361 each bind ATP; that span reads KEKGAEADI. Asp455 acts as the Proton acceptor; for kinase activity in catalysis.

In the N-terminal section; belongs to the KAE1 / TsaD family. This sequence in the C-terminal section; belongs to the protein kinase superfamily. Tyr protein kinase family. BUD32 subfamily. In terms of assembly, component of the KEOPS complex that consists of Kae1, Bud32, Cgi121 and Pcc1; the whole complex dimerizes. Requires Fe(2+) as cofactor.

Its subcellular location is the cytoplasm. The enzyme catalyses L-seryl-[protein] + ATP = O-phospho-L-seryl-[protein] + ADP + H(+). The catalysed reaction is L-threonyl-[protein] + ATP = O-phospho-L-threonyl-[protein] + ADP + H(+). It carries out the reaction L-threonylcarbamoyladenylate + adenosine(37) in tRNA = N(6)-L-threonylcarbamoyladenosine(37) in tRNA + AMP + H(+). Its function is as follows. Required for the formation of a threonylcarbamoyl group on adenosine at position 37 (t(6)A37) in tRNAs that read codons beginning with adenine. Is a component of the KEOPS complex that is probably involved in the transfer of the threonylcarbamoyl moiety of threonylcarbamoyl-AMP (TC-AMP) to the N6 group of A37. The Kae1 domain likely plays a direct catalytic role in this reaction. The Bud32 domain probably displays kinase activity that regulates Kae1 function. The chain is Probable bifunctional tRNA threonylcarbamoyladenosine biosynthesis protein from Methanosphaera stadtmanae (strain ATCC 43021 / DSM 3091 / JCM 11832 / MCB-3).